The sequence spans 1116 residues: Large proline-rich protein bag6-B (1116 aa).

In terms of domain architecture, Ubiquitin-like spans 7–82 (MDVTVKTLDS…HLVERAPPQT (76 aa)). 7 disordered regions span residues 76-114 (ERAP…RNGN), 170-221 (EGQP…PSEY), 329-385 (STTG…HPHP), 473-502 (PAAP…APGA), 533-589 (GGSS…GTDQ), 640-678 (VPVS…ESLP), and 1058-1080 (TGAK…EAQG). The span at 79 to 100 (PPQTQTSTSGPSTSSSTSPSSS) shows a compositional bias: low complexity. The segment covering 194–207 (RETLPQTTQNADGQ) has biased composition (polar residues). Residues 208-219 (SNSTPTSHPSPS) show a composition bias toward low complexity. Residues 344–353 (GNATPSTNTS) show a composition bias toward polar residues. 3 stretches are compositionally biased toward low complexity: residues 482–502 (PGAA…APGA), 535–580 (SSTS…SVPS), and 641–652 (PVSTSPPQSASQ). Over residues 653 to 672 (APPPPSSPAPPAHSAPPPAA) the composition is skewed to pro residues. Residues 1068–1080 (CVKRELDNSEAQG) are compositionally biased toward basic and acidic residues.

As to quaternary structure, component of the bag6/bat3 complex.

The protein localises to the cytoplasm. Its subcellular location is the cytosol. The protein resides in the nucleus. It localises to the secreted. It is found in the extracellular exosome. Functionally, ATP-independent molecular chaperone preventing the aggregation of misfolded and hydrophobic patches-containing proteins. Functions as part of a cytosolic protein quality control complex, the bag6/bat3 complex, which maintains these client proteins in a soluble state and participates in their proper delivery to the endoplasmic reticulum or alternatively can promote their sorting to the proteasome where they undergo degradation. The bag6/bat3 complex is involved in the post-translational delivery of tail-anchored/type II transmembrane proteins to the endoplasmic reticulum membrane. Similarly, the bag6/bat3 complex also functions as a sorting platform for proteins of the secretory pathway that are mislocalized to the cytosol either delivering them to the proteasome for degradation or to the endoplasmic reticulum. The bag6/bat3 complex also plays a role in the endoplasmic reticulum-associated degradation (ERAD), a quality control mechanism that eliminates unwanted proteins of the endoplasmic reticulum through their retrotranslocation to the cytosol and their targeting to the proteasome. It maintains these retrotranslocated proteins in an unfolded yet soluble state condition in the cytosol to ensure their proper delivery to the proteasome. Also required for selective ubiquitin-mediated degradation of defective nascent chain polypeptides by the proteasome. Also involved in endoplasmic reticulum stress-induced pre-emptive quality control, a mechanism that selectively attenuates the translocation of newly synthesized proteins into the endoplasmic reticulum and reroutes them to the cytosol for proteasomal degradation. May ensure the proper degradation of these proteins and thereby protects the endoplasmic reticulum from protein overload upon stress. By stabilizing a large spectrum of proteins, may indirectly affect different biological processes including apoptosis. By controlling the steady-state expression of the IGF1R receptor, indirectly regulates the insulin-like growth factor receptor signaling pathway. In terms of biological role, when nuclear, may also act as a component of some chromatin regulator complex. This Xenopus laevis (African clawed frog) protein is Large proline-rich protein bag6-B.